The following is a 295-amino-acid chain: G1/S-specific cyclin-D1 (295 aa).

The 125-residue stretch at 28–152 (LRAMLKAEET…VLVNKLKWNL (125 aa)) folds into the Cyclin N-terminal domain. A disordered region spans residues 264–295 (QQNLDPKAAEEEEEEEEVDLACTPTDVRDVNI). Lys-270 is covalently cross-linked (Glycyl lysine isopeptide (Lys-Gly) (interchain with G-Cter in ubiquitin)). Positions 273 to 282 (EEEEEEEEVD) are enriched in acidic residues. Thr-286 is modified (phosphothreonine).

This sequence belongs to the cyclin family. Cyclin D subfamily. As to quaternary structure, interacts with either CDK4 or CDK6 protein kinase to form a serine/threonine kinase holoenzyme complex. The cyclin subunit imparts substrate specificity to the complex. Component of the ternary complex CCND1/CDK4/CDKN1B required for nuclear translocation and modulation of CDK4-mediated kinase activity. Interacts directly with CDKN1B. Can form similar complexes with either CDKN1A or CDKN2A. Interacts with UHRF2; the interaction ubiquitinates CCND1 and appears to occur independently of phosphorylation. Interacts with USP2. Interacts (via cyclin N-terminal domain) with INSM1 (via N-terminal region); the interaction competes with the binding of CCND1 to CDK4 during cell cycle progression and inhibits CDK4 activity. Interacts with CDK4; the interaction is prevented with the binding of CCND1 to INSM1 during cell cycle progression. In terms of processing, phosphorylation at Thr-286 by MAP kinases is required for ubiquitination and degradation by the DCX(AMBRA1) complex. It also plays an essential role for recognition by the FBXO31 component of SCF (SKP1-cullin-F-box) protein ligase complex following DNA damage. Ubiquitinated at Lys-270 by the DCX(AMBRA1) complex during the transition from G1 to S cell phase, leading to its degradation: ubiquitination is dependent on Thr-286 phosphorylation. The DCX(AMBRA1) complex represents the major regulator of CCND1 stability during the G1/S transition. Also ubiquitinated by the SCF(FBXO4) and Cul7-RING(FBXW8) ubiquitin-protein ligase complexes. Following DNA damage it is ubiquitinated by the SCF(FBXO31) protein ligase complex. SCF(FBXO31) ubiquitination is dependent on Thr-286 phosphorylation. Ubiquitinated also by UHRF2 apparently in a phosphorylation-independent manner. Ubiquitination leads to its degradation and G1 arrest. Deubiquitinated by USP2; leading to its stabilization.

Its subcellular location is the nucleus. It is found in the cytoplasm. It localises to the nucleus membrane. Its function is as follows. Regulatory component of the cyclin D1-CDK4 (DC) complex that phosphorylates and inhibits members of the retinoblastoma (RB) protein family including RB1 and regulates the cell-cycle during G(1)/S transition. Phosphorylation of RB1 allows dissociation of the transcription factor E2F from the RB/E2F complex and the subsequent transcription of E2F target genes which are responsible for the progression through the G(1) phase. Hypophosphorylates RB1 in early G(1) phase. Cyclin D-CDK4 complexes are major integrators of various mitogenenic and antimitogenic signals. Also a substrate for SMAD3, phosphorylating SMAD3 in a cell-cycle-dependent manner and repressing its transcriptional activity. Component of the ternary complex, cyclin D1/CDK4/CDKN1B, required for nuclear translocation and activity of the cyclin D-CDK4 complex. Exhibits transcriptional corepressor activity with INSM1 on the NEUROD1 and INS promoters in a cell cycle-independent manner. This chain is G1/S-specific cyclin-D1 (CCND1), found in Bos taurus (Bovine).